Here is a 325-residue protein sequence, read N- to C-terminus: MRIRPTRRLLLGAVAPLALVPLVACGQASGSESGQQPGLGGCGTSAHGSADAHEKEFRALEKKFDAHPGVYAIDTRDGQEITHRADERFAYGSTFKALQAGAILAQVLRDGREVRRGAEADGMDKVVHYGQDAILPNSPVTEKHVADGMSLRELCDAVVAYSDNTAANLLFDQLGGRRGSTRVLKQLGDHTTSMDRYEQELGSAVPGDPRDTSTPRAFAEDLRAFAVEDGEKAALAPNDREQLNDWMSGSRTGDALIRAGVPKDWKVEDKSGQVKYGTRNDIAVVRPPGRAPIVVSVMSHGDTQDAEPHDELVAEAGLVVADGLK.

The first 26 residues, 1–26 (MRIRPTRRLLLGAVAPLALVPLVACG), serve as a signal peptide directing secretion. The interval 30 to 50 (GSESGQQPGLGGCGTSAHGSA) is disordered. Ser-93 serves as the catalytic Acyl-ester intermediate. Residue 270 to 272 (KSG) coordinates substrate.

The protein belongs to the class-A beta-lactamase family.

The catalysed reaction is a beta-lactam + H2O = a substituted beta-amino acid. In Streptomyces cacaoi, this protein is Beta-lactamase 1 (blaL).